We begin with the raw amino-acid sequence, 580 residues long: Arginine--tRNA ligase (580 aa).

Positions 127–137 (PNTHKELHVGH) match the 'HIGH' region motif.

The protein belongs to the class-I aminoacyl-tRNA synthetase family. In terms of assembly, monomer.

Its subcellular location is the cytoplasm. It catalyses the reaction tRNA(Arg) + L-arginine + ATP = L-arginyl-tRNA(Arg) + AMP + diphosphate. This is Arginine--tRNA ligase from Bdellovibrio bacteriovorus (strain ATCC 15356 / DSM 50701 / NCIMB 9529 / HD100).